The primary structure comprises 308 residues: Glutaminase (308 aa).

Residues serine 66, asparagine 117, glutamate 161, asparagine 168, tyrosine 192, tyrosine 244, and valine 262 each coordinate substrate.

Belongs to the glutaminase family. In terms of assembly, homotetramer.

The enzyme catalyses L-glutamine + H2O = L-glutamate + NH4(+). The protein is Glutaminase of Salmonella choleraesuis (strain SC-B67).